Reading from the N-terminus, the 188-residue chain is Elongation factor P (188 aa).

Position 34 is an N6-(3,6-diaminohexanoyl)-5-hydroxylysine (Lys34).

The protein belongs to the elongation factor P family. May be beta-lysylated on the epsilon-amino group of Lys-34 by the combined action of EpmA and EpmB, and then hydroxylated on the C5 position of the same residue by EpmC (if this protein is present). Lysylation is critical for the stimulatory effect of EF-P on peptide-bond formation. The lysylation moiety may extend toward the peptidyltransferase center and stabilize the terminal 3-CCA end of the tRNA. Hydroxylation of the C5 position on Lys-34 may allow additional potential stabilizing hydrogen-bond interactions with the P-tRNA.

It localises to the cytoplasm. The protein operates within protein biosynthesis; polypeptide chain elongation. Functionally, involved in peptide bond synthesis. Alleviates ribosome stalling that occurs when 3 or more consecutive Pro residues or the sequence PPG is present in a protein, possibly by augmenting the peptidyl transferase activity of the ribosome. Modification of Lys-34 is required for alleviation. The chain is Elongation factor P from Coxiella burnetii (strain CbuK_Q154) (Coxiella burnetii (strain Q154)).